Here is a 676-residue protein sequence, read N- to C-terminus: MSTTVPLHASSFSSGTTGAGGGVQQALQLQHCAYHVGASVGSSGSALNNNSINVPNNNTMGMSSAGSSNGSNLVNGQQRSTRGASKQRRDQINVEIQKLRDLLPLSDLIKDRLFQLQVMSLGCIFIRKHRYQQTVLQPQLQMLQMQMSSPMPRGIDICKALRGFMLMVTRSGKILHVSDNASEYLGHSVEEIMCQGDSIYDLVDGRDHGAVQAELASGPPGAATFPEERVFICRLNLARTAKRQLQYHKFVLFQGRYIQPAEFYQQLNAQNSQPDCDQPVFSAYCQPLINPENAEGMSTGNTHVFSTQHYLDMKFKEADTMASQHLGFSKEQLKGMSWYGMIHPNHVPEIAHKHRLLCQEKEGSVLALIRLQAANGEWIWLHTVFSIRPNNELNSDGKRLRHVIHCFHQKLTDLEAATLQANSWIYSMRHTYPTVFSCQDSPPPSEEQQPSSPQTPPFTEQPPMLVEQKPLIGAGIAPGFPSLDYNQIKVEIPMRPINTQIPLFTPESSSPESSASLHTSLLPHHNAFPLDILEDILPSNDVLPELKDEVDEILRQVEQSPATSPAHSFPSNVNFGHRHSMPNAFDSAELYKYLGPALFDGNFAMQHQHHLQQQHQSQPNHPLQMTPIPPMSCPPSNYGQSNFLFHHQHLNQHLHHSQPPHPYHFDYYNRKRSWAV.

Over residues Ser45 to Asn72 the composition is skewed to low complexity. Positions Ser45–Arg89 are disordered. Positions Leu73–Ala84 are enriched in polar residues. The segment at Gly76–Arg89 is basic motif. One can recognise a bHLH domain in the interval Gly76–His129. A helix-loop-helix motif region spans residues Asp90–His129. The PAS domain maps to Met165 to Leu215. Positions Phe436–Pro462 are disordered.

Heterodimer; efficient DNA binding requires dimerization with another bHLH protein. Forms a heterodimer with ARNT homolog aha-1; binds DNA as heterodimer.

Its subcellular location is the nucleus. Its function is as follows. Transcription factor. Efficient DNA binding requires dimerization with another bHLH protein, such as ARNT homolog aha-1. Regulates transcription of target genes, probably acting in complex with aha-1. This is PAS domain-containing protein cky-1 from Caenorhabditis elegans.